The chain runs to 224 residues: Response regulator protein GraR (224 aa).

Positions 2 to 115 (DILLVEDDMT…VLIAKLQAIY (114 aa)) constitute a Response regulatory domain. Asp-51 is subject to 4-aspartylphosphate. The ompR/PhoB-type DNA-binding region spans 126-224 (KRVLSWQDAI…KIGKGYMAHG (99 aa)).

Phosphorylated by GraS.

It is found in the cytoplasm. Member of the two-component regulatory system GraR/GraS involved in resistance against cationic antimicrobial peptides (CAMPs). In Staphylococcus saprophyticus subsp. saprophyticus (strain ATCC 15305 / DSM 20229 / NCIMB 8711 / NCTC 7292 / S-41), this protein is Response regulator protein GraR (graR).